We begin with the raw amino-acid sequence, 860 residues long: Leucine--tRNA ligase (860 aa).

The 'HIGH' region motif lies at 42–52 (PYPSGRLHMGH). The 'KMSKS' region motif lies at 619 to 623 (KMSKS). Lys-622 serves as a coordination point for ATP.

It belongs to the class-I aminoacyl-tRNA synthetase family.

Its subcellular location is the cytoplasm. It carries out the reaction tRNA(Leu) + L-leucine + ATP = L-leucyl-tRNA(Leu) + AMP + diphosphate. This chain is Leucine--tRNA ligase, found in Cronobacter sakazakii (strain ATCC BAA-894) (Enterobacter sakazakii).